The following is a 746-amino-acid chain: Polyribonucleotide nucleotidyltransferase (746 aa).

2 residues coordinate Mg(2+): Asp519 and Asp525. Residues 585-644 (PRVIAVKIPVDKIGEVIGPKGKMINQIQEDTGADISIEDDGTVYIGATNGPSADAARSAI) form the KH domain. The S1 motif domain occupies 656 to 728 (GERYLGTVVK…DRGKLSLSPV (73 aa)).

Belongs to the polyribonucleotide nucleotidyltransferase family. Requires Mg(2+) as cofactor.

Its subcellular location is the cytoplasm. The enzyme catalyses RNA(n+1) + phosphate = RNA(n) + a ribonucleoside 5'-diphosphate. Functionally, involved in mRNA degradation. Catalyzes the phosphorolysis of single-stranded polyribonucleotides processively in the 3'- to 5'-direction. The chain is Polyribonucleotide nucleotidyltransferase from Arthrobacter sp. (strain FB24).